The chain runs to 351 residues: Snurportin-1 (351 aa).

2 disordered regions span residues 1–66 (MESS…QKGI) and 294–322 (EQKKKVNEQKEDPHTMEAEEDVESDEYDS). The segment covering 8 to 42 (LYKKGLDIGEQQKQRQKELLKQQKLRRQQEQDDYR) has biased composition (basic and acidic residues). The span at 52–62 (PRKKSGKRSGH) shows a compositional bias: basic residues. Positions 274–330 (VLQYMDAFEQKLAEHRRTLKEQKKKVNEQKEDPHTMEAEEDVESDEYDSLKRVLDQQ) form a coiled coil. Residues 294–310 (EQKKKVNEQKEDPHTME) are compositionally biased toward basic and acidic residues. Residues 311-320 (AEEDVESDEY) are compositionally biased toward acidic residues.

Belongs to the snurportin family. In terms of assembly, interacts with components of the snRNP complex including SmB and Smn; these interactions are RNA-dependent. Interacts with importin-7 msk but not with importin subunit beta Fs(2)Ket; the interaction is RNA-dependent.

The protein localises to the nucleus. Its subcellular location is the cytoplasm. The protein resides in the U-body. It localises to the nucleus speckle. It is found in the cajal body. Functions as an U snRNP-specific nuclear import adapter. Involved in the trimethylguanosine (m3G)-cap-dependent nuclear import of U snRNPs. Binds specifically to the terminal m3G-cap U snRNAs. The protein is Snurportin-1 of Drosophila melanogaster (Fruit fly).